A 211-amino-acid polypeptide reads, in one-letter code: tRNA (guanine-N(7)-)-methyltransferase (211 aa).

Residues Glu-44, Asp-69, Asp-96, and Asp-118 each contribute to the S-adenosyl-L-methionine site. Asp-118 is an active-site residue. A substrate-binding site is contributed by Lys-122. The tract at residues 124–129 is interaction with RNA; the sequence is RHEKRR. Substrate contacts are provided by residues Asp-154 and 191-194; that span reads TEYE.

This sequence belongs to the class I-like SAM-binding methyltransferase superfamily. TrmB family.

It catalyses the reaction guanosine(46) in tRNA + S-adenosyl-L-methionine = N(7)-methylguanosine(46) in tRNA + S-adenosyl-L-homocysteine. It participates in tRNA modification; N(7)-methylguanine-tRNA biosynthesis. Catalyzes the formation of N(7)-methylguanine at position 46 (m7G46) in tRNA. In Streptococcus equi subsp. zooepidemicus (strain H70), this protein is tRNA (guanine-N(7)-)-methyltransferase.